The chain runs to 354 residues: Protein RecA (354 aa).

67–74 (GPESSGKT) is an ATP binding site.

The protein belongs to the RecA family.

Its subcellular location is the cytoplasm. In terms of biological role, can catalyze the hydrolysis of ATP in the presence of single-stranded DNA, the ATP-dependent uptake of single-stranded DNA by duplex DNA, and the ATP-dependent hybridization of homologous single-stranded DNAs. It interacts with LexA causing its activation and leading to its autocatalytic cleavage. The polypeptide is Protein RecA (Haemophilus influenzae (strain 86-028NP)).